A 107-amino-acid chain; its full sequence is U1-lycotoxin-Ls1b (107 aa).

The first 20 residues, Met-1–Ser-20, serve as a signal peptide directing secretion. Residues Glu-21–Arg-41 constitute a propeptide that is removed on maturation. Cystine bridges form between Cys-44–Cys-59, Cys-51–Cys-68, Cys-58–Cys-86, and Cys-70–Cys-84.

This sequence belongs to the neurotoxin 19 (CSTX) family. 04 (U1-Lctx) subfamily. As to expression, expressed by the venom gland.

It is found in the secreted. The protein is U1-lycotoxin-Ls1b of Lycosa singoriensis (Wolf spider).